We begin with the raw amino-acid sequence, 158 residues long: Glycogen accumulation regulator GarA (158 aa).

A Phosphothreonine; by PknG modification is found at Thr20. Phosphothreonine; by PknB is present on Thr21. The FHA domain maps to 76–125; it reads TSAGRHPDSDIFLDDVTVSRRHAEFRLEGGEFQVVDVGSLNGTYVNREPV.

In terms of assembly, monomer. Binds via its FHA domain to Kgd, Gdh, and the N-terminal region of PknG. In terms of processing, phosphorylated on Thr-21 by PknB. Phosphorylated on Thr-20 by PknG. Phosphorylation at either Thr-20 or Thr-21 prevents binding to target enzymes.

Its function is as follows. Involved in regulation of glutamate metabolism. Acts as a phosphorylation-dependent molecular switch that modulates the activities of Kgd and Gdh. The polypeptide is Glycogen accumulation regulator GarA (garA) (Mycolicibacterium smegmatis (strain ATCC 700084 / mc(2)155) (Mycobacterium smegmatis)).